The chain runs to 207 residues: Enolase (207 aa).

Position 162 (glutamine 162) interacts with (2R)-2-phosphoglycerate. Glutamate 204 functions as the Proton donor in the catalytic mechanism.

This sequence belongs to the enolase family.

Its subcellular location is the cytoplasm. The protein resides in the secreted. It is found in the cell surface. The catalysed reaction is (2R)-2-phosphoglycerate = phosphoenolpyruvate + H2O. The protein operates within carbohydrate degradation; glycolysis; pyruvate from D-glyceraldehyde 3-phosphate: step 4/5. Its function is as follows. Catalyzes the reversible conversion of 2-phosphoglycerate (2-PG) into phosphoenolpyruvate (PEP). It is essential for the degradation of carbohydrates via glycolysis. The sequence is that of Enolase from Campylobacter fetus.